Here is a 236-residue protein sequence, read N- to C-terminus: Phosphoribosylaminoimidazole-succinocarboxamide synthase (236 aa).

Belongs to the SAICAR synthetase family.

The catalysed reaction is 5-amino-1-(5-phospho-D-ribosyl)imidazole-4-carboxylate + L-aspartate + ATP = (2S)-2-[5-amino-1-(5-phospho-beta-D-ribosyl)imidazole-4-carboxamido]succinate + ADP + phosphate + 2 H(+). The protein operates within purine metabolism; IMP biosynthesis via de novo pathway; 5-amino-1-(5-phospho-D-ribosyl)imidazole-4-carboxamide from 5-amino-1-(5-phospho-D-ribosyl)imidazole-4-carboxylate: step 1/2. This is Phosphoribosylaminoimidazole-succinocarboxamide synthase from Campylobacter jejuni subsp. jejuni serotype O:2 (strain ATCC 700819 / NCTC 11168).